The primary structure comprises 281 residues: MAEQQNPFSIKSKARFSLGAIALTLTLVLLNIAVYFYQIVFASPLDSRESNLILFGANIYQLSLTGDWWRYPISMMLHSNGTHLAFNCLALFVIGIGCERAYGKFKLLAIYIISGIGAALFSAYWQYYEISNSDLWTDSTVYITIGVGASGAIMGIAAASVIYLIKVVINKPNPHPVIQRRQKYQLYNLIAMIALTLINGLQSGVDNAAHIGGAIIGALISIAYILVPHKLRVANLCITVIAASLLTMMIYLYSFSTNKHLLEEREFIYQEVYTELADANQ.

Transmembrane regions (helical) follow at residues 16–36, 76–96, 105–125, 145–165, 185–205, 208–228, and 233–253; these read FSLGAIALTLTLVLLNIAVYF, MLHSNGTHLAFNCLALFVIGI, FKLLAIYIISGIGAALFSAYW, IGVGASGAIMGIAAASVIYLI, QLYNLIAMIALTLINGLQSGV, AAHIGGAIIGALISIAYILVP, and VANLCITVIAASLLTMMIYLY. The Nucleophile role is filled by serine 150. Histidine 210 acts as the Charge relay system in catalysis.

Belongs to the peptidase S54 family.

It is found in the cell membrane. It carries out the reaction Cleaves type-1 transmembrane domains using a catalytic dyad composed of serine and histidine that are contributed by different transmembrane domains.. Its function is as follows. Rhomboid serine protease that catalyzes intramembrane proteolysis. Mediates quorum-sensing and the subsequent regulation of target genes via activation of the Tat protein export system. Catalyzes the proteolytic activation of TatA by removal of its N-terminal extension. The protein is Rhomboid protease AarA (aarA) of Providencia stuartii.